Here is a 932-residue protein sequence, read N- to C-terminus: 2-oxoglutarate dehydrogenase E1 component (932 aa).

The protein belongs to the alpha-ketoglutarate dehydrogenase family. Homodimer. Part of the 2-oxoglutarate dehydrogenase (OGDH) complex composed of E1 (2-oxoglutarate dehydrogenase), E2 (dihydrolipoamide succinyltransferase) and E3 (dihydrolipoamide dehydrogenase); the complex contains multiple copies of the three enzymatic components (E1, E2 and E3). The cofactor is thiamine diphosphate.

The enzyme catalyses N(6)-[(R)-lipoyl]-L-lysyl-[protein] + 2-oxoglutarate + H(+) = N(6)-[(R)-S(8)-succinyldihydrolipoyl]-L-lysyl-[protein] + CO2. In terms of biological role, E1 component of the 2-oxoglutarate dehydrogenase (OGDH) complex which catalyzes the decarboxylation of 2-oxoglutarate, the first step in the conversion of 2-oxoglutarate to succinyl-CoA and CO(2). This is 2-oxoglutarate dehydrogenase E1 component from Staphylococcus aureus (strain MW2).